The chain runs to 710 residues: Subtilisin-like protease SBT4.8 (710 aa).

The N-terminal stretch at 1–23 (MVKRASFCLLSCLIILFLSSVSA) is a signal peptide. The propeptide at 24–111 (IIYDPQDKQV…VFRSKNYKLQ (88 aa)) is activation peptide. Positions 33-110 (VYVVYMGSLP…SVFRSKNYKL (78 aa)) constitute an Inhibitor I9 domain. The Peptidase S8 domain maps to 115-559 (SWDFMGMKEG…AGHVDPIAAI (445 aa)). The active-site Charge relay system is the Asp-143. Asn-174 carries an N-linked (GlcNAc...) asparagine glycan. Residue His-198 is the Charge relay system of the active site. Residues Asn-221, Asn-364, and Asn-419 are each glycosylated (N-linked (GlcNAc...) asparagine). The PA domain occupies 354-414 (KYPLEYGDYL…VLSQDDFDSL (61 aa)). Ser-498 serves as the catalytic Charge relay system. N-linked (GlcNAc...) asparagine glycosylation is found at Asn-535, Asn-568, Asn-580, Asn-618, and Asn-636.

Belongs to the peptidase S8 family. Post-translationally, the C-terminal propeptide is autocleaved.

The protein localises to the secreted. This is Subtilisin-like protease SBT4.8 from Arabidopsis thaliana (Mouse-ear cress).